Reading from the N-terminus, the 453-residue chain is SH2 domain-containing protein 4A (453 aa).

The stretch at 96–127 (EIIAEQARREAEKEAEQLRKKQEVELSQLSTL) forms a coiled coil. A disordered region spans residues 280–301 (AVKRPPIPPKPKLPPSANNSSI). A compositionally biased stretch (pro residues) spans 284 to 293 (PPIPPKPKLP). The SH2 domain occupies 347–439 (WFHGIISRQE…LGRELLRFPC (93 aa)).

It localises to the cytoplasm. In terms of biological role, inhibits estrogen-induced cell proliferation. This chain is SH2 domain-containing protein 4A (sh2d4a), found in Xenopus tropicalis (Western clawed frog).